Here is a 212-residue protein sequence, read N- to C-terminus: Pyridoxine/pyridoxamine 5'-phosphate oxidase (212 aa).

Substrate-binding positions include 8 to 11 (RRTY) and lysine 66. FMN contacts are provided by residues 61 to 66 (RIVLLK), 76 to 77 (FT), arginine 82, lysine 83, and glutamine 105. Tyrosine 123, arginine 127, and serine 131 together coordinate substrate. Residues 140-141 (QS) and tryptophan 184 each bind FMN. 190 to 192 (RLH) is a substrate binding site. Arginine 194 provides a ligand contact to FMN.

The protein belongs to the pyridoxamine 5'-phosphate oxidase family. In terms of assembly, homodimer. The cofactor is FMN.

It carries out the reaction pyridoxamine 5'-phosphate + O2 + H2O = pyridoxal 5'-phosphate + H2O2 + NH4(+). It catalyses the reaction pyridoxine 5'-phosphate + O2 = pyridoxal 5'-phosphate + H2O2. Its pathway is cofactor metabolism; pyridoxal 5'-phosphate salvage; pyridoxal 5'-phosphate from pyridoxamine 5'-phosphate: step 1/1. It participates in cofactor metabolism; pyridoxal 5'-phosphate salvage; pyridoxal 5'-phosphate from pyridoxine 5'-phosphate: step 1/1. Its function is as follows. Catalyzes the oxidation of either pyridoxine 5'-phosphate (PNP) or pyridoxamine 5'-phosphate (PMP) into pyridoxal 5'-phosphate (PLP). This is Pyridoxine/pyridoxamine 5'-phosphate oxidase from Cupriavidus taiwanensis (strain DSM 17343 / BCRC 17206 / CCUG 44338 / CIP 107171 / LMG 19424 / R1) (Ralstonia taiwanensis (strain LMG 19424)).